We begin with the raw amino-acid sequence, 101 residues long: Small ribosomal subunit protein uS14 (101 aa).

This sequence belongs to the universal ribosomal protein uS14 family. As to quaternary structure, part of the 30S ribosomal subunit. Contacts proteins S3 and S10.

Functionally, binds 16S rRNA, required for the assembly of 30S particles and may also be responsible for determining the conformation of the 16S rRNA at the A site. In Hahella chejuensis (strain KCTC 2396), this protein is Small ribosomal subunit protein uS14.